The sequence spans 145 residues: MRTTPMANASNIERKWLVVDAAGKTLGRLSTEVASILRGKHKPTYTPHVDTGDHVIIINAEKIELTGKKLTDKIYYRHTQHPGGLKSRTALEMRTNYPEKMLELAIKGMLPKGSLGRQMFKKLNVYRGSEHPHQAQKPEVYELRG.

The protein belongs to the universal ribosomal protein uL13 family. Part of the 50S ribosomal subunit.

In terms of biological role, this protein is one of the early assembly proteins of the 50S ribosomal subunit, although it is not seen to bind rRNA by itself. It is important during the early stages of 50S assembly. The polypeptide is Large ribosomal subunit protein uL13 (Bacillus licheniformis (strain ATCC 14580 / DSM 13 / JCM 2505 / CCUG 7422 / NBRC 12200 / NCIMB 9375 / NCTC 10341 / NRRL NRS-1264 / Gibson 46)).